Consider the following 104-residue polypeptide: Enhancer of rudimentary homolog 1 (104 aa).

Belongs to the E(R) family. Homodimer. Component of the erh1-mmi1 complex. Interacts with mmi1 (via N-terminus) in a 2:2 stoichiometry.

Its subcellular location is the nucleus. The protein resides in the cytoplasm. Functionally, forms part of the erh1-mmi1 complex that recruits the CCR4-NOT complex and the NURS complex to target RNAs. Suppresses the meiotic program during vegetative growth and promotes the meiotic program during mating. Recruitment of the NURS complex to target mRNAs promotes mRNA decay by engagement of the nuclear exosome, and formation of heterochromatin islands at meiotic genes silenced by the exosome. Recruitment of the CCR4-NOT complex to target RNAs promotes heterochromatin formation at RNAi-dependent heterochromatin domains (HOODs), including a subset of meiotic genes, lncRNAs and retrotransposons. Recruitment of the CCR4-NOT complex to rDNA promotes rDNA heterochromatin assembly. This is Enhancer of rudimentary homolog 1 from Schizosaccharomyces pombe (strain 972 / ATCC 24843) (Fission yeast).